The primary structure comprises 181 residues: Protein GrpE (181 aa).

It belongs to the GrpE family. In terms of assembly, homodimer.

The protein localises to the cytoplasm. Participates actively in the response to hyperosmotic and heat shock by preventing the aggregation of stress-denatured proteins, in association with DnaK and GrpE. It is the nucleotide exchange factor for DnaK and may function as a thermosensor. Unfolded proteins bind initially to DnaJ; upon interaction with the DnaJ-bound protein, DnaK hydrolyzes its bound ATP, resulting in the formation of a stable complex. GrpE releases ADP from DnaK; ATP binding to DnaK triggers the release of the substrate protein, thus completing the reaction cycle. Several rounds of ATP-dependent interactions between DnaJ, DnaK and GrpE are required for fully efficient folding. In Verminephrobacter eiseniae (strain EF01-2), this protein is Protein GrpE.